Here is a 310-residue protein sequence, read N- to C-terminus: Nuclear hormone receptor family member nhr-89 (310 aa).

The segment at residues Glu-5 to Lys-79 is a DNA-binding region (nuclear receptor). NR C4-type zinc fingers lie at residues Cys-8–Cys-29 and Cys-43–Cys-67. The 210-residue stretch at Lys-101–Phe-310 folds into the NR LBD domain.

Belongs to the nuclear hormone receptor family.

It localises to the nucleus. In terms of biological role, orphan nuclear receptor. The sequence is that of Nuclear hormone receptor family member nhr-89 (nhr-89) from Caenorhabditis elegans.